The primary structure comprises 164 residues: Peptidyl-prolyl cis-trans isomerase A-like 4F (164 aa).

A PPIase cyclophilin-type domain is found at 7–163 (FFEITRDGKP…KKITIADCGQ (157 aa)).

This sequence belongs to the cyclophilin-type PPIase family. PPIase A subfamily.

The protein localises to the cytoplasm. The catalysed reaction is [protein]-peptidylproline (omega=180) = [protein]-peptidylproline (omega=0). PPIases accelerate the folding of proteins. It catalyzes the cis-trans isomerization of proline imidic peptide bonds in oligopeptides. This is Peptidyl-prolyl cis-trans isomerase A-like 4F from Homo sapiens (Human).